Consider the following 202-residue polypeptide: Small ribosomal subunit protein uS4 (202 aa).

Residues 1–13 (MSRYRGPRLRVTR) show a composition bias toward basic residues. The segment at 1–42 (MSRYRGPRLRVTRRLGELPGLTRKASKKSNPPGQHGQARRKR) is disordered. The S4 RNA-binding domain maps to 90-152 (NRLDNVCFRL…KASKKLVEGN (63 aa)).

The protein belongs to the universal ribosomal protein uS4 family. As to quaternary structure, part of the 30S ribosomal subunit. Contacts protein S5. The interaction surface between S4 and S5 is involved in control of translational fidelity.

One of the primary rRNA binding proteins, it binds directly to 16S rRNA where it nucleates assembly of the body of the 30S subunit. Its function is as follows. With S5 and S12 plays an important role in translational accuracy. The chain is Small ribosomal subunit protein uS4 from Prochlorococcus marinus (strain AS9601).